The following is a 139-amino-acid chain: 3-hydroxyacyl-[acyl-carrier-protein] dehydratase FabZ (139 aa).

His47 is a catalytic residue.

Belongs to the thioester dehydratase family. FabZ subfamily.

The protein resides in the cytoplasm. The enzyme catalyses a (3R)-hydroxyacyl-[ACP] = a (2E)-enoyl-[ACP] + H2O. Functionally, involved in unsaturated fatty acids biosynthesis. Catalyzes the dehydration of short chain beta-hydroxyacyl-ACPs and long chain saturated and unsaturated beta-hydroxyacyl-ACPs. The chain is 3-hydroxyacyl-[acyl-carrier-protein] dehydratase FabZ from Oenococcus oeni (strain ATCC BAA-331 / PSU-1).